Here is a 444-residue protein sequence, read N- to C-terminus: E1B 55 kDa protein (444 aa).

A disordered region spans residues 1-27; that stretch reads MEQDSDLESGRATNQRPPRVRVRGAGV. Phosphoserine is present on residues S438 and S439.

The protein belongs to the adenoviridae E1B 55 kDa protein family. In terms of assembly, interacts with host PML-4 and PML-5; this interaction promotes efficient subnuclear targeting of E1B-55K to PML nuclear bodies. Interacts with E4-ORF3 protein. Interacts with E4-ORF6 protein.

It is found in the host nucleus. It localises to the host cytoplasm. Plays a major role to prevent cellular inhibition of viral genome replication. Assembles an SCF-like E3 ubiquitin ligase complex based on the cellular proteins ELOB, ELOC, CUL5 and RBX1, in cooperation with viral E4orf6. This viral RING-type ligase ubiquitinates cellular substrates and targets them to proteasomal degradation: TP53/p53, LIG4, MRE11-RAD50-NBS1 (MRN) complex, ITGA3, DAXX and BLM. E1B-55K probably acts as the substrate-specific adapter of the SCF-like E3 ubiquitin ligase complex. Degradation of host TP53/p53 activity is essential for preventing E1A-induced TP53 accumulation that would otherwise lead to cell apoptosis and growth arrest. E1B-55K also inactivates TP53 transcription-factor activity by binding its transactivation domain. E1B-55K also functions as a SUMO1 E3 ligase for TP53 which causes the latter to be sequestered in promyelocytic leukemia (PML) nuclear bodies thereby contributing to maximal inhibition of TP53 function. In Canis lupus familiaris (Dog), this protein is E1B 55 kDa protein.